Consider the following 206-residue polypeptide: Imidazoleglycerol-phosphate dehydratase (206 aa).

A disordered region spans residues Met1–Thr21.

The protein belongs to the imidazoleglycerol-phosphate dehydratase family.

The protein localises to the cytoplasm. The catalysed reaction is D-erythro-1-(imidazol-4-yl)glycerol 3-phosphate = 3-(imidazol-4-yl)-2-oxopropyl phosphate + H2O. The protein operates within amino-acid biosynthesis; L-histidine biosynthesis; L-histidine from 5-phospho-alpha-D-ribose 1-diphosphate: step 6/9. The sequence is that of Imidazoleglycerol-phosphate dehydratase from Synechococcus sp. (strain JA-2-3B'a(2-13)) (Cyanobacteria bacterium Yellowstone B-Prime).